Reading from the N-terminus, the 456-residue chain is MFVLNRSSGLIHRSVPLLAQVSTPTTSTTKLAQLHTTHALSKEDYYKTLGVDKKSDAKAIKKAYFQLAKKYHPDVNKTKEAQTKFQEISEAYEVLSDDTKRQEYDAYGSGGGPAGGRGGAGGFHHHGNVDVNEIFRRAFGGGGGMGGFNFDNFAQSAFGHSAAQEMVMDISFEEAVRGATKNVSVNVVEDCLKCHGTQVEPGHKKTSCPYCNGTGAVSQRLQGGFFYQTTCNRCRGSGHYNKNPCQECEGEGQTVQRRQVSFNVPAGTNNGDSLKFQVGKNQLFVRFNVAPSLKFRREKDDIHCDVDISLAQAVLGGTVKVPGINGDTYVHIPAGTGSHTKMRLTGKGVKRLHSYGNGDQYMHIKVTVPKYLTAEQKQIMLAWAATEQLKDGTIKGLEKNQKTEEKETKKNEEKKSEGASESQKRRSEPVAENAETIDENQENEGFFEKIKRKIFG.

Positions 44-108 constitute a J domain; the sequence is DYYKTLGVDK…TKRQEYDAYG (65 aa). Residues 178 to 257 form a CR-type zinc finger; sequence GATKNVSVNV…CEGEGQTVQR (80 aa). CXXCXGXG motif repeat units lie at residues 208–215, 231–238, and 245–252; these read CPYCNGTG, CNRCRGSG, and CQECEGEG. Basic and acidic residues predominate over residues 395 to 429; it reads KGLEKNQKTEEKETKKNEEKKSEGASESQKRRSEP. Positions 395–443 are disordered; the sequence is KGLEKNQKTEEKETKKNEEKKSEGASESQKRRSEPVAENAETIDENQEN.

This Caenorhabditis elegans protein is DnaJ homolog dnj-10 (dnj-10).